The chain runs to 27 residues: Cysteine-rich venom protein tropirin (27 aa).

This sequence belongs to the CRISP family. In terms of processing, contains 8 disulfide bonds. In terms of tissue distribution, expressed by the venom gland.

Its subcellular location is the secreted. Blocks contraction of smooth muscle elicited by high potassium-induced depolarization, but does not block caffeine-stimulated contraction. May target voltage-gated calcium channels on smooth muscle. In Tropidechis carinatus (Australian rough-scaled snake), this protein is Cysteine-rich venom protein tropirin.